Consider the following 639-residue polypeptide: Pheromone B alpha 1 receptor (639 aa).

7 helical membrane passes run 8–28, 37–57, 70–90, 113–133, 163–183, 209–229, and 272–292; these read LFPI…PWHL, FFMM…VAWA, ISIR…LCII, ILVD…LQYI, VWPV…LLQF, MALA…VIVL, and LTRW…GFAE. 4 disordered regions span residues 375-416, 490-516, 532-563, and 611-639; these read PRPM…SSPI, TVPH…SSSA, SADV…RLPS, and TTAG…RASV. Residues 383–398 are compositionally biased toward low complexity; that stretch reads SSSGFSSSDSTRFGSS. Composition is skewed to low complexity over residues 541–551 and 611–621; these read GSSAGGVASTS and TTAGAPATTTP.

Belongs to the G-protein coupled receptor 4 family.

It is found in the membrane. In terms of biological role, receptor for the BAP1 pheromone, a prenylated mating factor. Has a role in the initiation of B-regulated nuclear migration. This chain is Pheromone B alpha 1 receptor (BAR1), found in Schizophyllum commune (Split gill fungus).